Consider the following 333-residue polypeptide: Flap endonuclease 1 (333 aa).

An N-domain region spans residues 1-99 (MGVALREVLT…ETIESRREVR (99 aa)). Mg(2+)-binding residues include Asp-28, Asp-81, Glu-153, Glu-155, Asp-174, Asp-176, and Asp-235. An I-domain region spans residues 117 to 256 (EAYKQARASS…TALKIVKKDG (140 aa)). Positions 325–333 (GQKTLDRWF) are interaction with PCNA.

This sequence belongs to the XPG/RAD2 endonuclease family. FEN1 subfamily. As to quaternary structure, interacts with PCNA. PCNA stimulates the nuclease activity without altering cleavage specificity. Mg(2+) is required as a cofactor.

Functionally, structure-specific nuclease with 5'-flap endonuclease and 5'-3' exonuclease activities involved in DNA replication and repair. During DNA replication, cleaves the 5'-overhanging flap structure that is generated by displacement synthesis when DNA polymerase encounters the 5'-end of a downstream Okazaki fragment. Binds the unpaired 3'-DNA end and kinks the DNA to facilitate 5' cleavage specificity. Cleaves one nucleotide into the double-stranded DNA from the junction in flap DNA, leaving a nick for ligation. Also involved in the base excision repair (BER) pathway. Acts as a genome stabilization factor that prevents flaps from equilibrating into structures that lead to duplications and deletions. Also possesses 5'-3' exonuclease activity on nicked or gapped double-stranded DNA. In Methanosphaerula palustris (strain ATCC BAA-1556 / DSM 19958 / E1-9c), this protein is Flap endonuclease 1.